The chain runs to 134 residues: Profilin-2 (134 aa).

Residues Cys13 and Cys118 are joined by a disulfide bond. Positions 84–100 match the Involved in PIP2 interaction motif; sequence AVIRGKKGSGGITIKKT. Phosphothreonine is present on Thr114.

It belongs to the profilin family. Occurs in many kinds of cells as a complex with monomeric actin in a 1:1 ratio. In terms of processing, phosphorylated by MAP kinases.

The protein localises to the cytoplasm. It is found in the cytoskeleton. Functionally, binds to actin and affects the structure of the cytoskeleton. At high concentrations, profilin prevents the polymerization of actin, whereas it enhances it at low concentrations. This Olea europaea (Common olive) protein is Profilin-2.